The sequence spans 108 residues: Immunoglobulin kappa variable 11-125 (108 aa).

The framework-1 stretch occupies residues 1-23; it reads DVQMIQSPSSLSASLGDIVTMTC. An intrachain disulfide couples C23 to C88. A complementarity-determining-1 region spans residues 24–34; sequence QASQGTSINLN. The tract at residues 35 to 49 is framework-2; the sequence is WFQQKPGKAPKLLIY. The segment at 50–56 is complementarity-determining-2; sequence GASILED. The interval 57-88 is framework-3; sequence GVPSRFSGSRYGTDFTLTISSLEDEDMATYFC. A complementarity-determining-3 region spans residues 89-97; that stretch reads LQHSYLPYT. Residues 98–108 are framework-4; the sequence is FGGGTKLEIKR.

This is Immunoglobulin kappa variable 11-125 from Mus musculus (Mouse).